Here is a 284-residue protein sequence, read N- to C-terminus: ELMO domain-containing protein B (284 aa).

Residues 124–276 enclose the ELMO domain; that stretch reads EHEASLERLW…EFETKISQNS (153 aa).

This chain is ELMO domain-containing protein B (elmoB), found in Dictyostelium discoideum (Social amoeba).